Reading from the N-terminus, the 426-residue chain is UDP-N-acetylglucosamine 1-carboxyvinyltransferase (426 aa).

Residue 23-24 coordinates phosphoenolpyruvate; that stretch reads KN. Arginine 99 lines the UDP-N-acetyl-alpha-D-glucosamine pocket. Aspartate 123 functions as the Proton donor in the catalytic mechanism. UDP-N-acetyl-alpha-D-glucosamine-binding residues include aspartate 311 and isoleucine 333.

The protein belongs to the EPSP synthase family. MurA subfamily.

It is found in the cytoplasm. The enzyme catalyses phosphoenolpyruvate + UDP-N-acetyl-alpha-D-glucosamine = UDP-N-acetyl-3-O-(1-carboxyvinyl)-alpha-D-glucosamine + phosphate. It functions in the pathway cell wall biogenesis; peptidoglycan biosynthesis. Functionally, cell wall formation. Adds enolpyruvyl to UDP-N-acetylglucosamine. The polypeptide is UDP-N-acetylglucosamine 1-carboxyvinyltransferase (Nocardia farcinica (strain IFM 10152)).